The following is a 403-amino-acid chain: Argininosuccinate synthase (403 aa).

Residues 13–21 (AYSGGLDTS) and A40 each bind ATP. L-citrulline contacts are provided by Y91 and S96. G121 contributes to the ATP binding site. L-aspartate is bound by residues T123, N127, and D128. L-citrulline is bound at residue N127. L-citrulline-binding residues include R131, S180, S189, E265, and Y277.

Belongs to the argininosuccinate synthase family. Type 1 subfamily. In terms of assembly, homotetramer.

It is found in the cytoplasm. The enzyme catalyses L-citrulline + L-aspartate + ATP = 2-(N(omega)-L-arginino)succinate + AMP + diphosphate + H(+). It functions in the pathway amino-acid biosynthesis; L-arginine biosynthesis; L-arginine from L-ornithine and carbamoyl phosphate: step 2/3. In Leptospira borgpetersenii serovar Hardjo-bovis (strain JB197), this protein is Argininosuccinate synthase.